Consider the following 229-residue polypeptide: Ribonuclease 3 (229 aa).

An RNase III domain is found at 4-133 (WEELQESVGF…FIGALYLDNG (130 aa)). Mg(2+) is bound at residue E46. D50 is a catalytic residue. Mg(2+) is bound by residues D119 and E122. Residue E122 is part of the active site. In terms of domain architecture, DRBM spans 159-228 (DYKTQLQEIV…AQFAINQLTH (70 aa)).

Belongs to the ribonuclease III family. Homodimer. It depends on Mg(2+) as a cofactor.

It is found in the cytoplasm. The enzyme catalyses Endonucleolytic cleavage to 5'-phosphomonoester.. Digests double-stranded RNA. Involved in the processing of primary rRNA transcript to yield the immediate precursors to the large and small rRNAs (23S and 16S). Processes some mRNAs, and tRNAs when they are encoded in the rRNA operon. Processes pre-crRNA and tracrRNA of type II CRISPR loci if present in the organism. This chain is Ribonuclease 3, found in Listeria innocua serovar 6a (strain ATCC BAA-680 / CLIP 11262).